Consider the following 214-residue polypeptide: 3-isopropylmalate dehydratase small subunit (214 aa).

Belongs to the LeuD family. LeuD type 1 subfamily. In terms of assembly, heterodimer of LeuC and LeuD.

It catalyses the reaction (2R,3S)-3-isopropylmalate = (2S)-2-isopropylmalate. It functions in the pathway amino-acid biosynthesis; L-leucine biosynthesis; L-leucine from 3-methyl-2-oxobutanoate: step 2/4. Its function is as follows. Catalyzes the isomerization between 2-isopropylmalate and 3-isopropylmalate, via the formation of 2-isopropylmaleate. This is 3-isopropylmalate dehydratase small subunit from Pseudomonas putida (strain ATCC 47054 / DSM 6125 / CFBP 8728 / NCIMB 11950 / KT2440).